The sequence spans 582 residues: Phosphoribosylaminoimidazole carboxylase (582 aa).

In terms of domain architecture, ATP-grasp spans 114 to 305 (KKYLAEKGVA…QFENHLRAIL (192 aa)). 143–200 (AGRLGLPLMLKAKTLAYDGRGNSPLKSTSSEDIQASLKFLGDRPLYAEGWAPFVKEVA) serves as a coordination point for ATP.

This sequence in the C-terminal section; belongs to the AIR carboxylase family. Class I subfamily.

The enzyme catalyses 5-amino-1-(5-phospho-D-ribosyl)imidazole-4-carboxylate + H(+) = 5-amino-1-(5-phospho-beta-D-ribosyl)imidazole + CO2. It participates in purine metabolism; IMP biosynthesis via de novo pathway; 5-amino-1-(5-phospho-D-ribosyl)imidazole-4-carboxylate from 5-amino-1-(5-phospho-D-ribosyl)imidazole (carboxylase route): step 1/1. This is Phosphoribosylaminoimidazole carboxylase (ADE2) from Cryptococcus neoformans var. grubii serotype A (strain H99 / ATCC 208821 / CBS 10515 / FGSC 9487) (Filobasidiella neoformans var. grubii).